The following is a 343-amino-acid chain: MTTDTTGRTGNPAATASPDRFRYGFLKGNPQLTKNGELKHLLSIEGLPRSIVNHILDTAEQFVSVTDREVKKVPLLRGKSVFNLFFENSTRTRTTFEIAATRLSADVLNLNINASSTSKGESLLDTINNLSAMHADLFVVRHASSGAPYLIAEHCAPHVHVINAGDGRHAHPTQGLLDMYTIRHYKRDFTKLRVAIVGDILHSRVARSDIHALTTLGVPEVRAIGPRTLLPGGLEQMGVKVFHNLDEGLKGVDVIIMLRLQNERMSGALLPSAQEYFKTWGLTPERLALAAPDAIVMHPGPMNRGVEIDSQVADGPQSVILNQVTFGIAVRMAVMGIVAGNSD.

The span at 1-14 shows a compositional bias: polar residues; that stretch reads MTTDTTGRTGNPAA. The disordered stretch occupies residues 1-20; the sequence is MTTDTTGRTGNPAATASPDR. Carbamoyl phosphate-binding residues include Arg91 and Thr92. Residue Lys119 participates in L-aspartate binding. Positions 141, 171, and 174 each coordinate carbamoyl phosphate. The L-aspartate site is built by Arg204 and Arg259. Carbamoyl phosphate contacts are provided by Gly300 and Pro301.

The protein belongs to the aspartate/ornithine carbamoyltransferase superfamily. ATCase family. Heterododecamer (2C3:3R2) of six catalytic PyrB chains organized as two trimers (C3), and six regulatory PyrI chains organized as three dimers (R2).

The catalysed reaction is carbamoyl phosphate + L-aspartate = N-carbamoyl-L-aspartate + phosphate + H(+). The protein operates within pyrimidine metabolism; UMP biosynthesis via de novo pathway; (S)-dihydroorotate from bicarbonate: step 2/3. Functionally, catalyzes the condensation of carbamoyl phosphate and aspartate to form carbamoyl aspartate and inorganic phosphate, the committed step in the de novo pyrimidine nucleotide biosynthesis pathway. The sequence is that of Aspartate carbamoyltransferase catalytic subunit from Burkholderia lata (strain ATCC 17760 / DSM 23089 / LMG 22485 / NCIMB 9086 / R18194 / 383).